The sequence spans 734 residues: Ribosomal RNA large subunit methyltransferase K/L (734 aa).

Residues 49-167 (QAYRVCMWSR…KTEHTYCLDL (119 aa)) enclose the THUMP domain.

The protein belongs to the methyltransferase superfamily. RlmKL family.

Its subcellular location is the cytoplasm. It catalyses the reaction guanosine(2445) in 23S rRNA + S-adenosyl-L-methionine = N(2)-methylguanosine(2445) in 23S rRNA + S-adenosyl-L-homocysteine + H(+). It carries out the reaction guanosine(2069) in 23S rRNA + S-adenosyl-L-methionine = N(2)-methylguanosine(2069) in 23S rRNA + S-adenosyl-L-homocysteine + H(+). Specifically methylates the guanine in position 2445 (m2G2445) and the guanine in position 2069 (m7G2069) of 23S rRNA. The sequence is that of Ribosomal RNA large subunit methyltransferase K/L from Acinetobacter baylyi (strain ATCC 33305 / BD413 / ADP1).